Reading from the N-terminus, the 329-residue chain is Ribosomal RNA small subunit methyltransferase C (329 aa).

Belongs to the methyltransferase superfamily. RsmC family. Monomer.

The protein localises to the cytoplasm. It carries out the reaction guanosine(1207) in 16S rRNA + S-adenosyl-L-methionine = N(2)-methylguanosine(1207) in 16S rRNA + S-adenosyl-L-homocysteine + H(+). In terms of biological role, specifically methylates the guanine in position 1207 of 16S rRNA in the 30S particle. This chain is Ribosomal RNA small subunit methyltransferase C, found in Actinobacillus pleuropneumoniae serotype 5b (strain L20).